The primary structure comprises 274 residues: Nitrogenase iron protein (274 aa).

Position 8–15 (8–15 (GKGGIGKS)) interacts with ATP. Cys-94 is a [4Fe-4S] cluster binding site. The residue at position 97 (Arg-97) is an ADP-ribosylarginine; by dinitrogenase reductase ADP-ribosyltransferase. Position 131 (Cys-131) interacts with [4Fe-4S] cluster.

Belongs to the NifH/BchL/ChlL family. As to quaternary structure, homodimer. Requires [4Fe-4S] cluster as cofactor. In terms of processing, the reversible ADP-ribosylation of Arg-97 inactivates the nitrogenase reductase and regulates nitrogenase activity.

It carries out the reaction N2 + 8 reduced [2Fe-2S]-[ferredoxin] + 16 ATP + 16 H2O = H2 + 8 oxidized [2Fe-2S]-[ferredoxin] + 2 NH4(+) + 16 ADP + 16 phosphate + 6 H(+). Functionally, the key enzymatic reactions in nitrogen fixation are catalyzed by the nitrogenase complex, which has 2 components: the iron protein and the molybdenum-iron protein. The chain is Nitrogenase iron protein from Chlorobium phaeovibrioides (strain DSM 265 / 1930) (Prosthecochloris vibrioformis (strain DSM 265)).